A 652-amino-acid chain; its full sequence is ATP-dependent zinc metalloprotease FtsH 2 (652 aa).

Residues 1–6 are Cytoplasmic-facing; the sequence is MNKYRR. Residues 7 to 27 traverse the membrane as a helical segment; it reads GLALGALALAVFILIGVGISM. Topologically, residues 28–108 are extracellular; it reads RATPQPVNLT…PAGNGAISAD (81 aa). The chain crosses the membrane as a helical span at residues 109–129; the sequence is LMLLLRILTIVAVGVVIFVLF. The Cytoplasmic portion of the chain corresponds to 130 to 652; that stretch reads RRFGPSSIGT…RAAKPQIDRT (523 aa). ATP is bound at residue 200-207; sequence GPPGTGKT. H420 is a Zn(2+) binding site. E421 is a catalytic residue. 2 residues coordinate Zn(2+): H424 and D496.

This sequence in the central section; belongs to the AAA ATPase family. In the C-terminal section; belongs to the peptidase M41 family. As to quaternary structure, homohexamer. Zn(2+) serves as cofactor.

The protein localises to the cell membrane. Its function is as follows. Acts as a processive, ATP-dependent zinc metallopeptidase for both cytoplasmic and membrane proteins. Plays a role in the quality control of integral membrane proteins. The sequence is that of ATP-dependent zinc metalloprotease FtsH 2 from Sphaerobacter thermophilus (strain ATCC 49802 / DSM 20745 / KCCM 41009 / NCIMB 13125 / S 6022).